The primary structure comprises 455 residues: Bifunctional protein GlmU (455 aa).

The tract at residues 1–229 is pyrophosphorylase; sequence MSKKVMSVVI…LNEIEGINDG (229 aa). UDP-N-acetyl-alpha-D-glucosamine is bound by residues 11-14, K25, Q76, 81-82, 103-105, G140, E154, N169, and N227; these read LAAG, GT, and YGD. Mg(2+) is bound at residue D105. N227 serves as a coordination point for Mg(2+). The interval 230–250 is linker; it reads LQLARLERLFQKQQAEKLLLS. Residues 251–455 are N-acetyltransferase; it reads GVRILDPARF…IQGWKRPKKT (205 aa). UDP-N-acetyl-alpha-D-glucosamine contacts are provided by R333 and K351. H363 acts as the Proton acceptor in catalysis. 2 residues coordinate UDP-N-acetyl-alpha-D-glucosamine: Y366 and N377. Acetyl-CoA-binding positions include A380, 386–387, S405, A423, and R440; that span reads NY.

This sequence in the N-terminal section; belongs to the N-acetylglucosamine-1-phosphate uridyltransferase family. It in the C-terminal section; belongs to the transferase hexapeptide repeat family. Homotrimer. Requires Mg(2+) as cofactor.

The protein localises to the cytoplasm. It carries out the reaction alpha-D-glucosamine 1-phosphate + acetyl-CoA = N-acetyl-alpha-D-glucosamine 1-phosphate + CoA + H(+). The catalysed reaction is N-acetyl-alpha-D-glucosamine 1-phosphate + UTP + H(+) = UDP-N-acetyl-alpha-D-glucosamine + diphosphate. It functions in the pathway nucleotide-sugar biosynthesis; UDP-N-acetyl-alpha-D-glucosamine biosynthesis; N-acetyl-alpha-D-glucosamine 1-phosphate from alpha-D-glucosamine 6-phosphate (route II): step 2/2. Its pathway is nucleotide-sugar biosynthesis; UDP-N-acetyl-alpha-D-glucosamine biosynthesis; UDP-N-acetyl-alpha-D-glucosamine from N-acetyl-alpha-D-glucosamine 1-phosphate: step 1/1. It participates in bacterial outer membrane biogenesis; LPS lipid A biosynthesis. Its function is as follows. Catalyzes the last two sequential reactions in the de novo biosynthetic pathway for UDP-N-acetylglucosamine (UDP-GlcNAc). The C-terminal domain catalyzes the transfer of acetyl group from acetyl coenzyme A to glucosamine-1-phosphate (GlcN-1-P) to produce N-acetylglucosamine-1-phosphate (GlcNAc-1-P), which is converted into UDP-GlcNAc by the transfer of uridine 5-monophosphate (from uridine 5-triphosphate), a reaction catalyzed by the N-terminal domain. The sequence is that of Bifunctional protein GlmU from Hamiltonella defensa subsp. Acyrthosiphon pisum (strain 5AT).